The sequence spans 198 residues: Ribonuclease HII (198 aa).

The 189-residue stretch at 10-198 folds into the RNase H type-2 domain; that stretch reads QLVAGVDEVG…PVKRALGLAS (189 aa). Positions 16, 17, and 108 each coordinate a divalent metal cation.

It belongs to the RNase HII family. Mn(2+) serves as cofactor. Mg(2+) is required as a cofactor.

The protein resides in the cytoplasm. It catalyses the reaction Endonucleolytic cleavage to 5'-phosphomonoester.. Endonuclease that specifically degrades the RNA of RNA-DNA hybrids. The sequence is that of Ribonuclease HII from Shigella boydii serotype 18 (strain CDC 3083-94 / BS512).